We begin with the raw amino-acid sequence, 370 residues long: tRNA-specific 2-thiouridylase MnmA (370 aa).

ATP contacts are provided by residues 8–15 (GMSGGVDS) and M34. Positions 104–106 (NPD) are interaction with target base in tRNA. The active-site Nucleophile is the C109. C109 and C202 are disulfide-bonded. G134 contributes to the ATP binding site. Residues 152-154 (KDQ) form an interaction with tRNA region. The active-site Cysteine persulfide intermediate is the C202. An interaction with tRNA region spans residues 309-310 (RY).

Belongs to the MnmA/TRMU family.

It is found in the cytoplasm. It catalyses the reaction S-sulfanyl-L-cysteinyl-[protein] + uridine(34) in tRNA + AH2 + ATP = 2-thiouridine(34) in tRNA + L-cysteinyl-[protein] + A + AMP + diphosphate + H(+). In terms of biological role, catalyzes the 2-thiolation of uridine at the wobble position (U34) of tRNA, leading to the formation of s(2)U34. The chain is tRNA-specific 2-thiouridylase MnmA from Metamycoplasma arthritidis (strain 158L3-1) (Mycoplasma arthritidis).